The primary structure comprises 449 residues: Probable secreted beta-glucosidase ARB_04747 (449 aa).

The first 21 residues, 1-21, serve as a signal peptide directing secretion; sequence MKFSSGILSLAVAASVQSVQA. Residue N57 is glycosylated (N-linked (GlcNAc...) asparagine). Residues 96 to 185 form a disordered region; it reads SPPACPAPSY…RPFPDGEIDC (90 aa). Residues 98-125 are compositionally biased toward pro residues; sequence PACPAPSYVPSPPAAPSSPPAAPQPPSK. The segment covering 131 to 150 has biased composition (basic and acidic residues); it reads EEPKKPEEPKKPEGPKKPEG.

This sequence belongs to the SUN family.

It localises to the secreted. It is found in the cell wall. Cell surface beta-glucosidase involved in cytokinesis, cell wall biogenesis, adhesion to host tissue; thus playing an important role in the host-pathogen interaction. Has hydrolytic activity on linear (1-&gt;3)-beta-D-glucans such as laminaribiose and other laminarioligosaccharides. In Arthroderma benhamiae (strain ATCC MYA-4681 / CBS 112371) (Trichophyton mentagrophytes), this protein is Probable secreted beta-glucosidase ARB_04747.